Here is a 262-residue protein sequence, read N- to C-terminus: Steroid 5-alpha-reductase DET2 (262 aa).

The next 6 helical transmembrane spans lie at 13 to 33, 51 to 71, 79 to 99, 113 to 133, 148 to 168, and 205 to 225; these read CLLTLIFAGPPTAVLLKFLQA, IAWFVMESPTLWLTLLLFPFG, SLLLFSPYLIHYFHRTIIYPL, FPITIAALAFTFNLLNGYIQA, WFWWRFVIGMVVFITGMYINI, and AIEWLGWAVMTWSWAGIGFFL.

Belongs to the steroid 5-alpha reductase family.

The protein resides in the membrane. The enzyme catalyses a 3-oxo-5alpha-steroid + NADP(+) = a 3-oxo-Delta(4)-steroid + NADPH + H(+). The catalysed reaction is 5alpha-campestan-3-one + NADP(+) = campest-4-en-3-one + NADPH + H(+). It catalyses the reaction (22S,24R)-22-hydroxy-5alpha-ergostan-3-one + NADP(+) = (22S)-22-hydroxycampest-4-en-3-one + NADPH + H(+). It carries out the reaction 3-dehydro-6-deoxoteasterone + NADP(+) = (22R,23R)-22,23-dihydroxycampest-4-en-3-one + NADPH + H(+). The protein operates within plant hormone biosynthesis; brassinosteroid biosynthesis. With respect to regulation, inhibited by the 4-azasteroids 4-MA. Involved in a reduction step in the biosynthesis of the plant steroid, brassinolide (BL); acts at the second step in brassinolide biosynthesis in the 5alpha-reduction of (24R)- 24-methylcholest-4-en-3-one, which is further modified to form campestanol. Can use progesterone, testosterone, androstenedione and campestenone as substrate. Also catalyzes the conversion of campest-4-en-3-one (campesta-4-en-3-one, 4-en-3-one) to campest-3-one (campesta-3-one, 3-one), of (22S,24R)-22-hydroxyergost-4-en-3-one (22-hydroxy-campesta-4-en-3-one, 22-OH-4-en-3-one) to (22S,24R)-22-hydroxy-5alpha-ergostan-3-one (22-hydroxy-campesta-3-one, 22-OH-3-one), and of (22R,23R)-22,23-dihydroxy-5alpha-campestan-3-one (22,23,diOH-4-en-3-one) to (22R,23R)-22,23-dihydroxycampest-4-en-3-one (6-deoxo3DT). Required for the brassinosteroid- (BR) dependent regulation of seed size and shape as well as embryo development. This Arabidopsis thaliana (Mouse-ear cress) protein is Steroid 5-alpha-reductase DET2.